A 1357-amino-acid polypeptide reads, in one-letter code: DNA-directed RNA polymerase subunit beta (1357 aa).

It belongs to the RNA polymerase beta chain family. The RNAP catalytic core consists of 2 alpha, 1 beta, 1 beta' and 1 omega subunit. When a sigma factor is associated with the core the holoenzyme is formed, which can initiate transcription.

It carries out the reaction RNA(n) + a ribonucleoside 5'-triphosphate = RNA(n+1) + diphosphate. Functionally, DNA-dependent RNA polymerase catalyzes the transcription of DNA into RNA using the four ribonucleoside triphosphates as substrates. The polypeptide is DNA-directed RNA polymerase subunit beta (Pseudomonas savastanoi pv. phaseolicola (strain 1448A / Race 6) (Pseudomonas syringae pv. phaseolicola (strain 1448A / Race 6))).